A 248-amino-acid polypeptide reads, in one-letter code: 4-hydroxy-tetrahydrodipicolinate reductase (248 aa).

NAD(+) contacts are provided by residues aspartate 32, 74 to 76, and 99 to 102; these read GTT and SANF. Histidine 134 serves as the catalytic Proton donor/acceptor. Histidine 135 is a (S)-2,3,4,5-tetrahydrodipicolinate binding site. Lysine 138 (proton donor) is an active-site residue. (S)-2,3,4,5-tetrahydrodipicolinate is bound at residue 144–145; the sequence is GT.

It belongs to the DapB family.

It localises to the cytoplasm. The enzyme catalyses (S)-2,3,4,5-tetrahydrodipicolinate + NAD(+) + H2O = (2S,4S)-4-hydroxy-2,3,4,5-tetrahydrodipicolinate + NADH + H(+). The catalysed reaction is (S)-2,3,4,5-tetrahydrodipicolinate + NADP(+) + H2O = (2S,4S)-4-hydroxy-2,3,4,5-tetrahydrodipicolinate + NADPH + H(+). Its pathway is amino-acid biosynthesis; L-lysine biosynthesis via DAP pathway; (S)-tetrahydrodipicolinate from L-aspartate: step 4/4. Its function is as follows. Catalyzes the conversion of 4-hydroxy-tetrahydrodipicolinate (HTPA) to tetrahydrodipicolinate. The protein is 4-hydroxy-tetrahydrodipicolinate reductase of Chlorobium limicola (strain DSM 245 / NBRC 103803 / 6330).